A 163-amino-acid polypeptide reads, in one-letter code: Aspartate 1-decarboxylase (163 aa).

Catalysis depends on S25, which acts as the Schiff-base intermediate with substrate; via pyruvic acid. S25 is modified (pyruvic acid (Ser)). T57 contacts substrate. Y58 acts as the Proton donor in catalysis. Residue 73 to 75 coordinates substrate; that stretch reads GAA.

This sequence belongs to the PanD family. Heterooctamer of four alpha and four beta subunits. It depends on pyruvate as a cofactor. Post-translationally, is synthesized initially as an inactive proenzyme, which is activated by self-cleavage at a specific serine bond to produce a beta-subunit with a hydroxyl group at its C-terminus and an alpha-subunit with a pyruvoyl group at its N-terminus.

The protein localises to the cytoplasm. The catalysed reaction is L-aspartate + H(+) = beta-alanine + CO2. It participates in cofactor biosynthesis; (R)-pantothenate biosynthesis; beta-alanine from L-aspartate: step 1/1. Functionally, catalyzes the pyruvoyl-dependent decarboxylation of aspartate to produce beta-alanine. This is Aspartate 1-decarboxylase from Saccharopolyspora erythraea (strain ATCC 11635 / DSM 40517 / JCM 4748 / NBRC 13426 / NCIMB 8594 / NRRL 2338).